The following is a 180-amino-acid chain: Large ribosomal subunit protein uL5 (180 aa).

The protein belongs to the universal ribosomal protein uL5 family. As to quaternary structure, part of the 50S ribosomal subunit; part of the 5S rRNA/L5/L18/L25 subcomplex. Contacts the 5S rRNA and the P site tRNA. Forms a bridge to the 30S subunit in the 70S ribosome.

In terms of biological role, this is one of the proteins that bind and probably mediate the attachment of the 5S RNA into the large ribosomal subunit, where it forms part of the central protuberance. In the 70S ribosome it contacts protein S13 of the 30S subunit (bridge B1b), connecting the 2 subunits; this bridge is implicated in subunit movement. Contacts the P site tRNA; the 5S rRNA and some of its associated proteins might help stabilize positioning of ribosome-bound tRNAs. This Synechocystis sp. (strain ATCC 27184 / PCC 6803 / Kazusa) protein is Large ribosomal subunit protein uL5.